Consider the following 138-residue polypeptide: Acidic phospholipase A2 AplTX-I (138 aa).

A signal peptide spans 1–16 (MRTLWIMAVLLLGVEG). Cystine bridges form between Cys42/Cys131, Cys44/Cys60, Cys59/Cys111, Cys65/Cys138, Cys66/Cys104, Cys73/Cys97, and Cys91/Cys102. Tyr43, Gly45, and Gly47 together coordinate Ca(2+). His63 is a catalytic residue. Asp64 contacts Ca(2+). Residue Asp105 is part of the active site.

In terms of assembly, monomer. Requires Ca(2+) as cofactor. In terms of tissue distribution, expressed by the venom gland.

Its subcellular location is the secreted. It carries out the reaction a 1,2-diacyl-sn-glycero-3-phosphocholine + H2O = a 1-acyl-sn-glycero-3-phosphocholine + a fatty acid + H(+). With respect to regulation, inhibited by divalent cations different from calcium ions (cadmium, magnesium, manganese, zinc), since they act as competitive antagonists of this cofactor. Its function is as follows. Snake venom phospholipase A2 (PLA2) that triggers a high neuromuscular toxicity in chick biventer cervicis preparations, but not in mouse phrenic nerve-diaphragm (PND) preparations, suggesting a selective neurotoxin activity towards birds. Does not induce myotoxic, coagulant, anticoagulant, edema, and antibacterial activities. PLA2 catalyzes the calcium-dependent hydrolysis of the 2-acyl groups in 3-sn-phosphoglycerides. The protein is Acidic phospholipase A2 AplTX-I of Agkistrodon piscivorus leucostoma (Western cottonmouth).